The sequence spans 654 residues: Pyoverdine export ATP-binding/permease protein PvdT (654 aa).

Residues 6-245 enclose the ABC transporter domain; that stretch reads IELCDIRKAY…AHKGIQAEEL (240 aa). 43 to 50 contacts ATP; sequence GASGSGKS. 4 helical membrane passes run 282–302, 529–549, 584–604, and 614–634; these read ALTL…LAVG, LSLM…IGVM, AIML…VVGA, and AFAL…GVVF.

This sequence belongs to the ABC transporter superfamily. Macrolide exporter (TC 3.A.1.122) family. As to quaternary structure, part of the tripartite efflux system PvdRT-OpmQ, which is composed of an inner membrane component with both ATPase and permease domains, PvdT, a periplasmic membrane fusion protein, PvdR, and an outer membrane component, OpmQ.

It is found in the cell inner membrane. With respect to regulation, has a basal ATPase activity that is stimulated by PvdR. In vitro, interaction with PVD influences the affinity of PvdT to PvdR. In terms of biological role, part of the tripartite efflux system PvdRT-OpmQ required for the secretion into the extracellular milieu of the siderophore pyoverdine (PVD), which is involved in iron acquisition. This subunit binds PVD and drives its secretion by hydrolyzing ATP. The system is responsible for export of newly synthesized PVD after the final steps of biosynthesis have taken place in the periplasm. It is also responsible for recycling of PVD after internalization of ferri-PVD into the periplasm by the outer-membrane receptor FpvA and release of iron from PVD, thus making PVD available for new cycles of iron uptake. Contributes to resistance against ampicillin. The polypeptide is Pyoverdine export ATP-binding/permease protein PvdT (Pseudomonas putida (strain ATCC 47054 / DSM 6125 / CFBP 8728 / NCIMB 11950 / KT2440)).